Reading from the N-terminus, the 188-residue chain is dCTP deaminase (188 aa).

DCTP is bound by residues 111–116 (KSTYAR), 135–137 (TLE), Gln-156, Tyr-170, and Gln-180. The Proton donor/acceptor role is filled by Glu-137.

This sequence belongs to the dCTP deaminase family. As to quaternary structure, homotrimer.

The catalysed reaction is dCTP + H2O + H(+) = dUTP + NH4(+). It participates in pyrimidine metabolism; dUMP biosynthesis; dUMP from dCTP (dUTP route): step 1/2. Functionally, catalyzes the deamination of dCTP to dUTP. This Ectopseudomonas mendocina (strain ymp) (Pseudomonas mendocina) protein is dCTP deaminase.